Consider the following 179-residue polypeptide: Large ribosomal subunit protein uL6 (179 aa).

It belongs to the universal ribosomal protein uL6 family. As to quaternary structure, part of the 50S ribosomal subunit.

This protein binds to the 23S rRNA, and is important in its secondary structure. It is located near the subunit interface in the base of the L7/L12 stalk, and near the tRNA binding site of the peptidyltransferase center. The polypeptide is Large ribosomal subunit protein uL6 (Prochlorococcus marinus (strain MIT 9515)).